A 193-amino-acid chain; its full sequence is Protein TEX261 (193 aa).

The next 5 helical transmembrane spans lie at 1–21 (MVGVTLANVLPVCLALLPPPA), 39–59 (SRIIKYMIWFSTAVLIGLYVF), 67–87 (IGVGLFTNLVYFGLLQTFPFI), 94–114 (FILSCGLVVVNHYLAFQFFAE), and 122–142 (VLAYFTFCLWIIPFAFFVSLS).

It belongs to the SVP26 family.

It localises to the membrane. The chain is Protein TEX261 (TEX261) from Bos taurus (Bovine).